The chain runs to 190 residues: MASFSTNEFKAGLKVMLDGNPCAILENEFVKPGKGQAFNRVKLRNLRSGKVLEQTFKSGDSLEAADVMDTEMNYLYNDGEFWHFMHPESFEQIQADKTAMSDSTKWLKENSNALCTITLFNGAPLSVTPPNFVELQITETDPGVRGDTSGGGGKPATLETGAVVRVPLFVQQGEVVRVDTRTGDYQTRVN.

Lys34 carries the N6-(3,6-diaminohexanoyl)-5-hydroxylysine modification.

The protein belongs to the elongation factor P family. Post-translationally, may be beta-lysylated on the epsilon-amino group of Lys-34 by the combined action of EpmA and EpmB, and then hydroxylated on the C5 position of the same residue by EpmC (if this protein is present). Lysylation is critical for the stimulatory effect of EF-P on peptide-bond formation. The lysylation moiety may extend toward the peptidyltransferase center and stabilize the terminal 3-CCA end of the tRNA. Hydroxylation of the C5 position on Lys-34 may allow additional potential stabilizing hydrogen-bond interactions with the P-tRNA.

Its subcellular location is the cytoplasm. It participates in protein biosynthesis; polypeptide chain elongation. Its function is as follows. Involved in peptide bond synthesis. Alleviates ribosome stalling that occurs when 3 or more consecutive Pro residues or the sequence PPG is present in a protein, possibly by augmenting the peptidyl transferase activity of the ribosome. Modification of Lys-34 is required for alleviation. The polypeptide is Elongation factor P (Psychrobacter arcticus (strain DSM 17307 / VKM B-2377 / 273-4)).